A 486-amino-acid polypeptide reads, in one-letter code: Cardiolipin synthase A (486 aa).

Helical transmembrane passes span 3-23 and 38-58; these read TFYT…IAGV and MAWL…YLSF. 2 PLD phosphodiesterase domains span residues 219 to 246 and 399 to 426; these read MDLR…VDPR and EGGL…DMRS. Catalysis depends on residues H224, K226, D231, H404, K406, and D411.

It belongs to the phospholipase D family. Cardiolipin synthase subfamily. ClsA sub-subfamily.

The protein resides in the cell inner membrane. The enzyme catalyses 2 a 1,2-diacyl-sn-glycero-3-phospho-(1'-sn-glycerol) = a cardiolipin + glycerol. Its function is as follows. Catalyzes the reversible phosphatidyl group transfer from one phosphatidylglycerol molecule to another to form cardiolipin (CL) (diphosphatidylglycerol) and glycerol. The protein is Cardiolipin synthase A of Escherichia fergusonii (strain ATCC 35469 / DSM 13698 / CCUG 18766 / IAM 14443 / JCM 21226 / LMG 7866 / NBRC 102419 / NCTC 12128 / CDC 0568-73).